The primary structure comprises 210 residues: Dephospho-CoA kinase (210 aa).

Residues 4-202 form the DPCK domain; the sequence is WVGLTGGIGS…AFYSGIFASK (199 aa). Position 12 to 17 (12 to 17) interacts with ATP; it reads GSGKSA.

It belongs to the CoaE family.

The protein localises to the cytoplasm. It carries out the reaction 3'-dephospho-CoA + ATP = ADP + CoA + H(+). The protein operates within cofactor biosynthesis; coenzyme A biosynthesis; CoA from (R)-pantothenate: step 5/5. In terms of biological role, catalyzes the phosphorylation of the 3'-hydroxyl group of dephosphocoenzyme A to form coenzyme A. In Neisseria gonorrhoeae (strain ATCC 700825 / FA 1090), this protein is Dephospho-CoA kinase.